A 116-amino-acid chain; its full sequence is Bacterial microcompartment shell protein CutR (116 aa).

One can recognise a BMC circularly permuted domain in the interval 10 to 108; that stretch reads RIIQESVPGK…LEYFKNSLGF (99 aa).

It belongs to the EutS/PduU family. As to quaternary structure, has been crystallized in 5 structures (all are mutated, 3 have an N-terminal His-tag), most are homohexameric with a central pore. In two the homohexamer lies flat with a beta-barrel on the flat face created by the protruding N termini of the six chains. In 2 others the hexamer is not flat but has a six-fold screw axis; the screw pitch is 33.8 or 41.9 Angstroms depending on the structure. Interacts with the BMC major shell protein.

It localises to the bacterial microcompartment. The protein operates within amine and polyamine metabolism; choline degradation. Its function is as follows. A minor shell protein of the choline degradation-specific bacterial microcompartment (BMC). Proteins such as this one with circularly permuted BMC domains may play a key role in conferring heterogeneity and flexibility in this BMC. The polypeptide is Bacterial microcompartment shell protein CutR (Streptococcus intermedius (strain ATCC 27335 / DSM 20573 / CCUG 32759 / CIP 103248 / JCM 12996 / LMG 17840 / NCTC 11324 / SK54 / 1877)).